We begin with the raw amino-acid sequence, 491 residues long: MSFTKFCRGCGQTLQSANESATGYIKPLKLSGIFSKGSVSNLLKKNLDEQAIFNNAFKNLNPQIKKHFPNTTSFPFHEKEIGRTDLLWCQRCHDLKFHSRIRPKELLQEPQTTLPDIISTVNNDKSTCLIIQVIDVTEVIFQDFVSATQYTHFPVFHLFTHADVLPPKKPYWLFPGLGISSKYAMLYTSHSFNLVDKLLGRINPLLCSRGHVYVVGEANSGKSTLLKTLAKRGNGVFNELLLDSFLPGTTQAIKGYPTQYFGSCFKQLSEGLIFDTPGYRGNLKSLLPWVDTKLLTSLVPKTRSRNKQLTSKPVQYRVRFGQSIILGGLVRVTPFEINEDGNHEVGKPIMFKKEDPSSTTIHFLFSTLKNKKTKGNTNNMKPLLIKLFTKLPAHITSITKLQSLENSTKNDNVPLVTHSPSPMHSSFTVSIKPTQLSENVFDPTSSGELVIHNFGFLSFSASRPMNLLVESVNPKAVSWRSAKPVVPKFNK.

This is an uncharacterized protein from Schizosaccharomyces pombe (strain 972 / ATCC 24843) (Fission yeast).